The sequence spans 79 residues: Acyl carrier protein (79 aa).

The 76-residue stretch at 2-77 folds into the Carrier domain; sequence ENIEQRVKKI…QAIDYVNAHL (76 aa). O-(pantetheine 4'-phosphoryl)serine is present on Ser37.

This sequence belongs to the acyl carrier protein (ACP) family. Post-translationally, 4'-phosphopantetheine is transferred from CoA to a specific serine of apo-ACP by AcpS. This modification is essential for activity because fatty acids are bound in thioester linkage to the sulfhydryl of the prosthetic group.

Its subcellular location is the cytoplasm. Its pathway is lipid metabolism; fatty acid biosynthesis. Carrier of the growing fatty acid chain in fatty acid biosynthesis. This is Acyl carrier protein from Azoarcus sp. (strain BH72).